The chain runs to 411 residues: Phosphoribosylaminoimidazole-succinocarboxamide synthase, chloroplastic (411 aa).

The transit peptide at Met1–Ser53 directs the protein to the chloroplast.

Belongs to the SAICAR synthetase family.

It localises to the plastid. It is found in the chloroplast. The enzyme catalyses 5-amino-1-(5-phospho-D-ribosyl)imidazole-4-carboxylate + L-aspartate + ATP = (2S)-2-[5-amino-1-(5-phospho-beta-D-ribosyl)imidazole-4-carboxamido]succinate + ADP + phosphate + 2 H(+). Its pathway is purine metabolism; IMP biosynthesis via de novo pathway; 5-amino-1-(5-phospho-D-ribosyl)imidazole-4-carboxamide from 5-amino-1-(5-phospho-D-ribosyl)imidazole-4-carboxylate: step 1/2. The chain is Phosphoribosylaminoimidazole-succinocarboxamide synthase, chloroplastic (PUR7) from Arabidopsis thaliana (Mouse-ear cress).